A 123-amino-acid chain; its full sequence is cAMP-responsive element-binding protein-like 2 (123 aa).

The interval 1 to 24 (MDDSKVVGGKVKKPGKRGRKPAKI) is disordered. A compositionally biased stretch (basic residues) spans 10–21 (KVKKPGKRGRKP). One can recognise a bZIP domain in the interval 23-86 (KIDLKAKLER…MAMDQGKIPS (64 aa)). A basic motif region spans residues 29–60 (KLERSRQSARECRARKKLRYQYLEELVSSRER). The segment at 62–69 (ICALREEL) is leucine-zipper. The interval 93–123 (TGEEQNKSQQNSSRHPKAGKTDANTNSLVGN) is disordered. The span at 114 to 123 (DANTNSLVGN) shows a compositional bias: polar residues.

Belongs to the bZIP family. ATF subfamily. In terms of assembly, interacts with CREB1; regulates CREB1 phosphorylation, stability and transcriptional activity. In terms of processing, phosphorylated by AMPK.

It localises to the nucleus. Probable regulator of CREB1 transcriptional activity which is involved in adipose cells differentiation. May also play a regulatory role in the cell cycle. The protein is cAMP-responsive element-binding protein-like 2 (Crebl2) of Rattus norvegicus (Rat).